Consider the following 443-residue polypeptide: Trimethylamine monooxygenase (443 aa).

4 residues coordinate FAD: Asp37, Gln39, Leu45, and Trp46. NADP(+)-binding residues include Trp70 and Asn72. 2 residues coordinate FAD: Asn72 and Val125. NADP(+) contacts are provided by Tyr170, Ser202, Ser203, Ser205, and Arg226. The FAD site is built by Gln315 and Thr318. Arg409 contributes to the NADP(+) binding site.

This sequence belongs to the FMO family. The cofactor is FAD.

It catalyses the reaction trimethylamine + NADPH + O2 = trimethylamine N-oxide + NADP(+) + H2O. Its function is as follows. Catalyzes the oxidation of trimethylamine (TMA) to produce trimethylamine N-oxide (TMAO). In vitro, has a broad substrate specificity, oxidizing many nitrogen- and sulfur-containing compounds, including dimethylamine (DMA), dimethylsulfide (DMS) and dimethylsulfoxide (DMSO). In Pelagibacter ubique (strain HTCC1002), this protein is Trimethylamine monooxygenase.